The following is a 72-amino-acid chain: Small, acid-soluble spore protein C (72 aa).

This sequence belongs to the alpha/beta-type SASP family.

Functionally, SASP are bound to spore DNA. They are double-stranded DNA-binding proteins that cause DNA to change to an a-like conformation. They protect the DNA backbone from chemical and enzymatic cleavage and are thus involved in dormant spore's high resistance to UV light. The chain is Small, acid-soluble spore protein C (sspC) from Bacillus subtilis (strain 168).